The primary structure comprises 313 residues: Olfactory receptor 4M2 (313 aa).

The Cytoplasmic segment spans residues 1 to 25 (METANYTKVTEFVLTGLSQTPEVQL). Residues 26 to 46 (VLFVIFLSFYLFILPGNILII) traverse the membrane as a helical segment. Over 47–57 (CTISLDPHLTS) the chain is Extracellular. A helical membrane pass occupies residues 58–78 (PMYFLLANLAFLDIWYSSITA). Residues 79–97 (PEMLIDFFVERKIISFDEC) lie on the Cytoplasmic side of the membrane. C97 and C179 form a disulfide bridge. A helical transmembrane segment spans residues 98 to 118 (IAQLFFLHFAGASEMFLLTVM). Topologically, residues 119 to 142 (AFDLYTAICRPLHYATIMNQRLCC) are extracellular. Residues 143-163 (ILVALSWRGGFIHSIIQVALI) traverse the membrane as a helical segment. Residues 164-204 (VRLPFCGPNELDSYFCDITQVVRIACANTFPEELVMICSSG) are Cytoplasmic-facing. The chain crosses the membrane as a helical span at residues 205 to 225 (LISVVCLIALLMSYAFLLALL). Topologically, residues 226–238 (KKLSGSGENTNRA) are extracellular. The chain crosses the membrane as a helical span at residues 239–259 (VSTCYSHITIVVLMFGPSIYI). Over 260 to 270 (YARPFDSFSLD) the chain is Cytoplasmic. A helical membrane pass occupies residues 271-291 (KVVSVFNTLIFPLHNPIIYTL). Over 292–313 (RNKEVKAAMRKLVTKYILCKEK) the chain is Extracellular.

Belongs to the G-protein coupled receptor 1 family.

It is found in the membrane. Odorant receptor. The chain is Olfactory receptor 4M2 from Homo sapiens (Human).